A 57-amino-acid polypeptide reads, in one-letter code: Small ribosomal subunit protein eS27 (57 aa).

Zn(2+) contacts are provided by cysteine 10, cysteine 13, cysteine 29, and cysteine 32. A C4-type zinc finger spans residues 10-32 (CDDCENEQVLFGKAANTVNCAVC).

It belongs to the eukaryotic ribosomal protein eS27 family. As to quaternary structure, part of the 30S ribosomal subunit. Zn(2+) serves as cofactor.

The chain is Small ribosomal subunit protein eS27 from Natronomonas pharaonis (strain ATCC 35678 / DSM 2160 / CIP 103997 / JCM 8858 / NBRC 14720 / NCIMB 2260 / Gabara) (Halobacterium pharaonis).